The chain runs to 412 residues: AT-rich interactive domain-containing protein 3C (412 aa).

A compositionally biased stretch (low complexity) spans 1-23 (MEALQKQQAARLAQGVGPLAPAC). The tract at residues 1–96 (MEALQKQQAA…SSQPPGLHPH (96 aa)) is disordered. The span at 50 to 73 (AEEEEDAEEDEEKREEAGAEEEAA) shows a compositional bias: acidic residues. Residues 78–87 (PGAQGPSSPS) are compositionally biased toward low complexity. Residues 113–205 (DPKRKEFLDD…YLYPYECETR (93 aa)) enclose the ARID domain. 2 disordered regions span residues 232-278 (TPLF…AHAC) and 388-412 (PVPASQGPTNPAPPPSTGPPSSILP). The segment covering 259–272 (TQSSPGPAQGSTSG) has biased composition (polar residues). The 86-residue stretch at 304–389 (LALGPTREKL…GVLFARRQPV (86 aa)) folds into the REKLES domain.

As to quaternary structure, interacts (via REKLES DOMAIN) with NPM1; the interaction mediates ARID3C nuclear shuttling.

Its subcellular location is the nucleus. Transcription factor involved in monocyte-to-macrophage differentiation. Forms a complex with NPM1 to translocate to the nucleus, acting as a transcription factor that promotes the expression of the genes involved in macrophage differentiation, such as STAT3, STAT1 and JUNB. The chain is AT-rich interactive domain-containing protein 3C from Homo sapiens (Human).